The following is a 328-amino-acid chain: Stress response kinase A (328 aa).

Asp201 functions as the Proton acceptor in the catalytic mechanism. 2 residues coordinate Mg(2+): Asn206 and Asp217. Asp217 is a catalytic residue.

It belongs to the SrkA/RdoA protein kinase family. In terms of assembly, monomer. The cofactor is Mg(2+).

It localises to the cytoplasm. The catalysed reaction is L-seryl-[protein] + ATP = O-phospho-L-seryl-[protein] + ADP + H(+). It carries out the reaction L-threonyl-[protein] + ATP = O-phospho-L-threonyl-[protein] + ADP + H(+). A protein kinase that phosphorylates Ser and Thr residues. Probably acts to suppress the effects of stress linked to accumulation of reactive oxygen species. Probably involved in the extracytoplasmic stress response. In Salmonella choleraesuis (strain SC-B67), this protein is Stress response kinase A.